A 389-amino-acid chain; its full sequence is tRNA pseudouridine synthase Pus10 (389 aa).

Catalysis depends on Asp-213, which acts as the Nucleophile. Tyr-278 and Tyr-350 together coordinate substrate.

It belongs to the pseudouridine synthase Pus10 family.

It catalyses the reaction uridine(54) in tRNA = pseudouridine(54) in tRNA. It carries out the reaction uridine(55) in tRNA = pseudouridine(55) in tRNA. Functionally, responsible for synthesis of pseudouridine from uracil-54 and uracil-55 in the psi GC loop of transfer RNAs. The chain is tRNA pseudouridine synthase Pus10 from Thermoplasma acidophilum (strain ATCC 25905 / DSM 1728 / JCM 9062 / NBRC 15155 / AMRC-C165).